A 516-amino-acid polypeptide reads, in one-letter code: Probable malate:quinone oxidoreductase (516 aa).

The protein belongs to the MQO family. FAD serves as cofactor.

The catalysed reaction is (S)-malate + a quinone = a quinol + oxaloacetate. It participates in carbohydrate metabolism; tricarboxylic acid cycle; oxaloacetate from (S)-malate (quinone route): step 1/1. The sequence is that of Probable malate:quinone oxidoreductase from Mycobacterium sp. (strain MCS).